Reading from the N-terminus, the 370-residue chain is Ganglioside-induced differentiation-associated protein 1-like 1 (370 aa).

The GST N-terminal domain maps to 45 to 129 (ESLVLYHWTQ…YVERTFTGEH (85 aa)). Positions 177-344 (PKYATAEIRR…RLVKRKPPSF (168 aa)) constitute a GST C-terminal domain.

The protein belongs to the GST superfamily.

The polypeptide is Ganglioside-induced differentiation-associated protein 1-like 1 (Gdap1l1) (Mus musculus (Mouse)).